We begin with the raw amino-acid sequence, 202 residues long: Imidazoleglycerol-phosphate dehydratase (202 aa).

It belongs to the imidazoleglycerol-phosphate dehydratase family.

It localises to the cytoplasm. The enzyme catalyses D-erythro-1-(imidazol-4-yl)glycerol 3-phosphate = 3-(imidazol-4-yl)-2-oxopropyl phosphate + H2O. Its pathway is amino-acid biosynthesis; L-histidine biosynthesis; L-histidine from 5-phospho-alpha-D-ribose 1-diphosphate: step 6/9. The chain is Imidazoleglycerol-phosphate dehydratase from Rhizobium etli (strain CIAT 652).